We begin with the raw amino-acid sequence, 278 residues long: UPF0276 protein Sama_1305 (278 aa).

This sequence belongs to the UPF0276 family.

The protein is UPF0276 protein Sama_1305 of Shewanella amazonensis (strain ATCC BAA-1098 / SB2B).